A 473-amino-acid chain; its full sequence is GTPase Der (473 aa).

EngA-type G domains follow at residues 3 to 167 (FTVA…GKDR) and 203 to 378 (LRVA…RVWN). Residues 9–16 (GRPNVGKS), 56–60 (DTAGL), 119–122 (NKSE), 209–216 (GRPNAGKS), 256–260 (DTAGM), and 321–324 (NKWD) each bind GTP. A KH-like domain is found at 379 to 463 (KRISTARLNR…PIRIHFRSAE (85 aa)).

Belongs to the TRAFAC class TrmE-Era-EngA-EngB-Septin-like GTPase superfamily. EngA (Der) GTPase family. Associates with the 50S ribosomal subunit.

Its function is as follows. GTPase that plays an essential role in the late steps of ribosome biogenesis. In Rhizobium etli (strain CIAT 652), this protein is GTPase Der.